Here is a 257-residue protein sequence, read N- to C-terminus: Protein orai-2 (257 aa).

The next 4 membrane-spanning stretches (helical) occupy residues threonine 67 to leucine 84, leucine 95 to isoleucine 115, leucine 149 to leucine 169, and alanine 199 to isoleucine 219.

It belongs to the Orai family.

It localises to the membrane. Functionally, ca(2+) release-activated Ca(2+)-like (CRAC-like) channel subunit which mediates Ca(2+) influx and increase in Ca(2+)-selective current by synergy with the Ca(2+) sensor, STIM1. In Gallus gallus (Chicken), this protein is Protein orai-2 (ORAI2).